The primary structure comprises 328 residues: Phosphate acetyltransferase (328 aa).

Belongs to the phosphate acetyltransferase and butyryltransferase family.

The protein localises to the cytoplasm. The catalysed reaction is acetyl-CoA + phosphate = acetyl phosphate + CoA. The protein operates within metabolic intermediate biosynthesis; acetyl-CoA biosynthesis; acetyl-CoA from acetate: step 2/2. The sequence is that of Phosphate acetyltransferase (pta) from Staphylococcus aureus (strain MRSA252).